Here is a 346-residue protein sequence, read N- to C-terminus: Heterogeneous nuclear ribonucleoprotein A1 (346 aa).

RRM domains follow at residues 23-123 and 114-191; these read RKIF…GVRE and KRLY…KGLS. 2 stretches are compositionally biased toward basic and acidic residues: residues 92–107 and 189–215; these read TVDP…KNRS and GLSK…RDGQ. Disordered regions lie at residues 92 to 111 and 189 to 346; these read TVDP…ESNV and GLSK…NRNY. Gly residues-rich tracts occupy residues 216–296 and 303–331; these read RGGY…GWGG and GGWG…GGQS. Residues 332–346 are compositionally biased toward low complexity; that stretch reads GAQQWAHAQGGNRNY.

The protein resides in the nucleus. It is found in the chromosome. Its subcellular location is the telomere. Functionally, this protein is a component of ribonucleosomes. Overexpression gradually increases telomere length, leading to increase lifespan. This is Heterogeneous nuclear ribonucleoprotein A1 from Caenorhabditis elegans.